Reading from the N-terminus, the 136-residue chain is MPRTELILNAAVILYTMIPPDAHSLGSEGRVVNGNWRDTSDVKEGSLPREVTKQVNGSLSSRTKQVNEFSKHTRFLVDISFSCCSLINRSLWESAQKDELSDSFGKALTTKPECLAVRETPRNFRRNLCLVIPSLN.

It localises to the mitochondrion. This is an uncharacterized protein from Arabidopsis thaliana (Mouse-ear cress).